A 123-amino-acid chain; its full sequence is Small ribosomal subunit protein uS12cz/uS12cy (123 aa).

This sequence belongs to the universal ribosomal protein uS12 family. Part of the 30S ribosomal subunit.

It is found in the plastid. Its subcellular location is the chloroplast. Functionally, with S4 and S5 plays an important role in translational accuracy. Located at the interface of the 30S and 50S subunits. This is Small ribosomal subunit protein uS12cz/uS12cy (rps12-A) from Eucalyptus globulus subsp. globulus (Tasmanian blue gum).